The chain runs to 301 residues: UDP-N-acetylenolpyruvoylglucosamine reductase (301 aa).

An FAD-binding PCMH-type domain is found at 24–190; that stretch reads RVGGLAQFYD…VSAQLQLQPG (167 aa). R169 is an active-site residue. S220 acts as the Proton donor in catalysis. Residue E290 is part of the active site.

Belongs to the MurB family. The cofactor is FAD.

The protein resides in the cytoplasm. It catalyses the reaction UDP-N-acetyl-alpha-D-muramate + NADP(+) = UDP-N-acetyl-3-O-(1-carboxyvinyl)-alpha-D-glucosamine + NADPH + H(+). It participates in cell wall biogenesis; peptidoglycan biosynthesis. Functionally, cell wall formation. The sequence is that of UDP-N-acetylenolpyruvoylglucosamine reductase from Synechococcus sp. (strain ATCC 27144 / PCC 6301 / SAUG 1402/1) (Anacystis nidulans).